The chain runs to 126 residues: Scygonadin (126 aa).

Positions 1–24 are cleaved as a signal peptide; that stretch reads MRSSLLLGLTVVVLLGVIVPPCMA.

As to expression, expressed in the ejaculatory ducts of mature males. Not detected in the ejaculatory ducts of immature males. Not detected in hepatopancreas, female reproductive tract, eyes, exoskeleton, subcuticular epithelia, heart, gills, stomach, muscle and hemocytes.

Its subcellular location is the secreted. Functionally, has antibacterial activity against the Gram-positive bacterium M.luteus with an IC(90) of 125ug/ml. Has weak antibacterial activity against the Gram-negative bacterium A.hydrophila. The sequence is that of Scygonadin from Scylla serrata (Mud crab).